The following is a 123-amino-acid chain: NADH-quinone oxidoreductase subunit A (123 aa).

The next 3 helical transmembrane spans lie at 11 to 31 (YLPIAIFFGIAVLVSGLIMML), 68 to 88 (LVAILFIIFDLEITFLVPWAI), and 93 to 113 (IGKIGFFSMMFFLFVLIIGFI).

It belongs to the complex I subunit 3 family. As to quaternary structure, NDH-1 is composed of 14 different subunits. Subunits NuoA, H, J, K, L, M, N constitute the membrane sector of the complex.

It is found in the cell inner membrane. The enzyme catalyses a quinone + NADH + 5 H(+)(in) = a quinol + NAD(+) + 4 H(+)(out). Its function is as follows. NDH-1 shuttles electrons from NADH, via FMN and iron-sulfur (Fe-S) centers, to quinones in the respiratory chain. The immediate electron acceptor for the enzyme in this species is believed to be ubiquinone. Couples the redox reaction to proton translocation (for every two electrons transferred, four hydrogen ions are translocated across the cytoplasmic membrane), and thus conserves the redox energy in a proton gradient. The chain is NADH-quinone oxidoreductase subunit A from Rickettsia typhi (strain ATCC VR-144 / Wilmington).